The primary structure comprises 242 residues: Dickkopf-like protein 1 (242 aa).

The signal sequence occupies residues 1-30 (MGEASPPAPARRHLLVLLLLLSTLVIPSAA). N-linked (GlcNAc...) asparagine glycosylation is found at asparagine 97 and asparagine 112.

Interacts with SLXL1; Co-localize in seminiferous tubules. Interacts with SLY. Post-translationally, N-glycosylated during spermatogenesis. Not N-glycosylated in mature sperm. More highly expressed in adult testis than in fetal testis. Exclusively expressed in the testis (at protein level). Intense expression in stages II, III and IV of spermatogenesis, whereas expression is lower in stage I.

The protein localises to the secreted. The protein resides in the cytoplasmic vesicle. Its subcellular location is the secretory vesicle. It localises to the acrosome. Involved in fertilization by facilitating sperm penetration of the zona pellucida. May promote spermatocyte apoptosis, thereby limiting sperm production. In adults, may reduce testosterone synthesis in Leydig cells. Is not essential either for development or fertility. This chain is Dickkopf-like protein 1, found in Homo sapiens (Human).